The chain runs to 129 residues: Phosphoribosyl-AMP cyclohydrolase (129 aa).

D77 contacts Mg(2+). C78 is a Zn(2+) binding site. Residues D79 and D81 each contribute to the Mg(2+) site. C94 and C101 together coordinate Zn(2+).

This sequence belongs to the PRA-CH family. Homodimer. Mg(2+) serves as cofactor. It depends on Zn(2+) as a cofactor.

It localises to the cytoplasm. The catalysed reaction is 1-(5-phospho-beta-D-ribosyl)-5'-AMP + H2O = 1-(5-phospho-beta-D-ribosyl)-5-[(5-phospho-beta-D-ribosylamino)methylideneamino]imidazole-4-carboxamide. It participates in amino-acid biosynthesis; L-histidine biosynthesis; L-histidine from 5-phospho-alpha-D-ribose 1-diphosphate: step 3/9. Its function is as follows. Catalyzes the hydrolysis of the adenine ring of phosphoribosyl-AMP. The polypeptide is Phosphoribosyl-AMP cyclohydrolase (Methanosphaera stadtmanae (strain ATCC 43021 / DSM 3091 / JCM 11832 / MCB-3)).